We begin with the raw amino-acid sequence, 346 residues long: Ketol-acid reductoisomerase (NADP(+)) (346 aa).

Residues 1-141 enclose the KARI N-terminal Rossmann domain; sequence KKNSILKKNQ…GAHHAGVLES (141 aa). NADP(+) contacts are provided by residues Ser-11 and 41-43; that span reads DKQ. His-65 is a catalytic residue. An NADP(+)-binding site is contributed by Gly-91. KARI C-terminal knotted domains lie at 142–286 and 287–346; these read SFVA…PEQE and YYDH…NKVI. The Mg(2+) site is built by Asp-150, Glu-154, Glu-322, and Glu-326.

It belongs to the ketol-acid reductoisomerase family. Mg(2+) serves as cofactor.

It carries out the reaction (2R)-2,3-dihydroxy-3-methylbutanoate + NADP(+) = (2S)-2-acetolactate + NADPH + H(+). The enzyme catalyses (2R,3R)-2,3-dihydroxy-3-methylpentanoate + NADP(+) = (S)-2-ethyl-2-hydroxy-3-oxobutanoate + NADPH + H(+). It participates in amino-acid biosynthesis; L-isoleucine biosynthesis; L-isoleucine from 2-oxobutanoate: step 2/4. The protein operates within amino-acid biosynthesis; L-valine biosynthesis; L-valine from pyruvate: step 2/4. Involved in the biosynthesis of branched-chain amino acids (BCAA). Catalyzes an alkyl-migration followed by a ketol-acid reduction of (S)-2-acetolactate (S2AL) to yield (R)-2,3-dihydroxy-isovalerate. In the isomerase reaction, S2AL is rearranged via a Mg-dependent methyl migration to produce 3-hydroxy-3-methyl-2-ketobutyrate (HMKB). In the reductase reaction, this 2-ketoacid undergoes a metal-dependent reduction by NADPH to yield (R)-2,3-dihydroxy-isovalerate. The polypeptide is Ketol-acid reductoisomerase (NADP(+)) (ilvC) (Buchnera aphidicola subsp. Uroleucon rurale).